Reading from the N-terminus, the 302-residue chain is uncharacterized protein (302 aa).

9 consecutive transmembrane segments (helical) span residues 3-23 (ILGVGYFLLGLILLYYGSDWF), 39-59 (FVIGATVMAIGTSLPEILTSA), 77-97 (SCICNIGLVLGLSAIISPIIV), 106-126 (LVYLLFVIFAAVIGIDGFSWI), 128-148 (GVVLLILFIIYLRWTVKNGSA), 163-183 (FSLVLLIIGLIGVLVGAELFV), 199-219 (VIGFTLVAFGTSLPELMVSLA), 227-247 (GMVLGNVIGSNIADIGGALAV), and 254-274 (LPAENVQMAVLVIMSLLLYLF).

Belongs to the Ca(2+):cation antiporter (CaCA) (TC 2.A.19) family.

The protein localises to the cell membrane. This is an uncharacterized protein from Methanocaldococcus jannaschii (strain ATCC 43067 / DSM 2661 / JAL-1 / JCM 10045 / NBRC 100440) (Methanococcus jannaschii).